The primary structure comprises 184 residues: Photosystem I assembly protein Ycf4 (184 aa).

2 consecutive transmembrane segments (helical) span residues 22–42 (FCWA…GTSS) and 57–77 (IVFF…LFIS).

It belongs to the Ycf4 family.

It is found in the plastid. Its subcellular location is the chloroplast thylakoid membrane. Its function is as follows. Seems to be required for the assembly of the photosystem I complex. The protein is Photosystem I assembly protein Ycf4 of Gossypium barbadense (Sea Island cotton).